We begin with the raw amino-acid sequence, 1604 residues long: Ubiquitin carboxyl-terminal hydrolase 32 (1604 aa).

3 EF-hand domains span residues 91-126 (KDEE…VDGK), 228-263 (IRPS…CCRG), and 264-299 (PLAE…LLEV). Ca(2+) contacts are provided by Asp-241, Asn-243, Asp-245, His-247, Glu-252, Asp-277, Asp-279, Asp-281, and Glu-288. A DUSP domain is found at 369–585 (ATPEEEGQII…SNLALPRPVI (217 aa)). One can recognise a USP domain in the interval 734-1567 (TGLSNLGNTC…SAYILFYEQQ (834 aa)). Cys-743 serves as the catalytic Nucleophile. Tyr-1173 is modified (phosphotyrosine). Ser-1350 carries the post-translational modification Phosphoserine. Residues 1353 to 1432 (EEDVLLSKSP…SKENLDTSKE (80 aa)) form a disordered region. Polar residues predominate over residues 1360 to 1370 (KSPSSLSANVT). Residues 1371-1399 (SSPKGSPSSSRKSGASCPSSKNSSPNSSP) are compositionally biased toward low complexity. Residues Ser-1372 and Ser-1376 each carry the phosphoserine modification. Positions 1415–1424 (GSKNKLSNSK) are enriched in polar residues. The residue at position 1454 (Ser-1454) is a Phosphoserine. The disordered stretch occupies residues 1484 to 1504 (SNGQLGNHSEEDSTDDQREET). The span at 1491–1504 (HSEEDSTDDQREET) shows a compositional bias: basic and acidic residues. The active-site Proton acceptor is the His-1526. Ser-1588 is subject to Phosphoserine. Cys-1601 is subject to Cysteine methyl ester. A lipid anchor (S-farnesyl cysteine) is attached at Cys-1601. A propeptide spans 1602 to 1604 (VLQ) (removed in mature form).

The protein belongs to the peptidase C19 family.

The protein localises to the golgi apparatus membrane. The catalysed reaction is Thiol-dependent hydrolysis of ester, thioester, amide, peptide and isopeptide bonds formed by the C-terminal Gly of ubiquitin (a 76-residue protein attached to proteins as an intracellular targeting signal).. Functionally, deubiquitinase that can remove conjugated ubiquitin from target proteins, such as RAB7A and LAMTOR1. Acts as a positive regulator of the mTORC1 signaling by mediating deubiquitination of LAMTOR1, thereby promoting the association between LAMTOR1 and the lysosomal V-ATPase complex and subsequent activation of the mTORC1 complex. The polypeptide is Ubiquitin carboxyl-terminal hydrolase 32 (Mus musculus (Mouse)).